The following is a 426-amino-acid chain: MASTVSFSPANVQMLQGRSCHGHAAFGGCSAVPRTGPRMRSVAVRVSSEQEAAPAVRAPSGRTIEECEADAVAGRFPAPPPLVRPKAPEGTPQIRPLDLTKRPRRNRRSPALRAAFQETTISPANLVLPLFIHEGEDDAPIGAMPGCYRLGWRHGLLDEVYKSRDVGVNSFVLFPKVPDALKSQSGDEAYNDNGLVPRTIRLLKDKFPDIVVYTDVALDPYSSDGHDGIVREDGVIMNDETVYQLCKQAVSQARAGADVVSPSDMMDGRVGAIRAALDAEGFHDVSIMSYTAKYASSFYGPFREALDSNPRFGDKKTYQMNPANYREALLETAADEAEGADILLVKPGLPYLDVIRLLRDNSALPIAAYQVSGEYSMIKAGGALNMIDEEKVMMESLMCLRRAGADIILTYFARQAANVLCGMRSN.

Residues 1 to 45 (MASTVSFSPANVQMLQGRSCHGHAAFGGCSAVPRTGPRMRSVAVR) constitute a chloroplast transit peptide. The segment at 74 to 107 (GRFPAPPPLVRPKAPEGTPQIRPLDLTKRPRRNR) is disordered. The active-site Schiff-base intermediate with substrate is lysine 293. Positions 303 and 315 each coordinate 5-aminolevulinate. Position 331 (glutamate 331) interacts with Mg(2+). The active-site Schiff-base intermediate with substrate is the lysine 346. Positions 372 and 411 each coordinate 5-aminolevulinate.

It belongs to the ALAD family. As to quaternary structure, homooctamer. The cofactor is Mg(2+).

The protein localises to the plastid. It is found in the chloroplast. The catalysed reaction is 2 5-aminolevulinate = porphobilinogen + 2 H2O + H(+). It participates in porphyrin-containing compound metabolism; protoporphyrin-IX biosynthesis; coproporphyrinogen-III from 5-aminolevulinate: step 1/4. In terms of biological role, catalyzes an early step in the biosynthesis of tetrapyrroles. Binds two molecules of 5-aminolevulinate per subunit, each at a distinct site, and catalyzes their condensation to form porphobilinogen. The polypeptide is Delta-aminolevulinic acid dehydratase, chloroplastic (HEMB) (Oryza sativa subsp. japonica (Rice)).